The following is a 210-amino-acid chain: Probable glutathione peroxidase 8 (210 aa).

A helical membrane pass occupies residues 13-35; the sequence is ASRAGLFKVLLSVALCMGSLYLL.

It belongs to the glutathione peroxidase family.

It is found in the membrane. The enzyme catalyses 2 glutathione + H2O2 = glutathione disulfide + 2 H2O. The polypeptide is Probable glutathione peroxidase 8 (gpx8) (Danio rerio (Zebrafish)).